An 82-amino-acid polypeptide reads, in one-letter code: MNPIVAATSVVSAGLAVGLAAIGPGMGQGTAAGYAVEGIARQPEAEGKIRGALLLSFAFMESLTIYGLVVALALLFANPFAG.

Met-1 is modified (N-formylmethionine). Transmembrane regions (helical) follow at residues Pro-3–Gly-23 and Phe-57–Ala-77.

The protein belongs to the ATPase C chain family. F-type ATPases have 2 components, F(1) - the catalytic core - and F(0) - the membrane proton channel. F(1) has five subunits: alpha(3), beta(3), gamma(1), delta(1), epsilon(1). F(0) has four main subunits: a(1), b(1), b'(1) and c(10-14). The alpha and beta chains form an alternating ring which encloses part of the gamma chain. F(1) is attached to F(0) by a central stalk formed by the gamma and epsilon chains, while a peripheral stalk is formed by the delta, b and b' chains.

It is found in the plastid. The protein localises to the chloroplast thylakoid membrane. In terms of biological role, f(1)F(0) ATP synthase produces ATP from ADP in the presence of a proton or sodium gradient. F-type ATPases consist of two structural domains, F(1) containing the extramembraneous catalytic core and F(0) containing the membrane proton channel, linked together by a central stalk and a peripheral stalk. During catalysis, ATP synthesis in the catalytic domain of F(1) is coupled via a rotary mechanism of the central stalk subunits to proton translocation. Key component of the F(0) channel; it plays a direct role in translocation across the membrane. A homomeric c-ring of between 10-14 subunits forms the central stalk rotor element with the F(1) delta and epsilon subunits. This chain is ATP synthase subunit c, chloroplastic, found in Chlamydomonas reinhardtii (Chlamydomonas smithii).